A 184-amino-acid polypeptide reads, in one-letter code: H(2)/formate:CoB-CoM heterodisulfide,ferredoxin reductase subunit C2 (184 aa).

4Fe-4S ferredoxin-type domains lie at 24–54 (GEKEVASLKSCYQCGTCTGSCPSGRRTAYRT) and 65–97 (IDSVLDSDDIWKCTTCYTCYERCPRDVKVTEII). [4Fe-4S] cluster-binding residues include Cys-34, Cys-37, Cys-40, Cys-44, Cys-77, Cys-80, Cys-83, and Cys-87.

It belongs to the HdrC family. As to quaternary structure, the heterodisulfide reductase is composed of three subunits; HdrA, HdrB and HdrC. B1 and B2 subunits are interchangeable, as are the C1 and C2 subunits. The heterodisulfide reductase forms a supercomplex with formylmethanofuran dehydrogenase (Fwd), F(420)-non-reducing hydrogenase (Vhu) and formate dehydrogenase (Fdh). Requires [4Fe-4S] cluster as cofactor.

It catalyses the reaction coenzyme B + coenzyme M + 2 reduced [2Fe-2S]-[ferredoxin] + 2 H(+) = coenzyme M-coenzyme B heterodisulfide + 2 H2 + 2 oxidized [2Fe-2S]-[ferredoxin]. The enzyme catalyses coenzyme B + coenzyme M + 2 reduced [2Fe-2S]-[ferredoxin] + 2 CO2 = coenzyme M-coenzyme B heterodisulfide + 2 formate + 2 oxidized [2Fe-2S]-[ferredoxin]. It functions in the pathway cofactor metabolism; coenzyme M-coenzyme B heterodisulfide reduction; coenzyme B and coenzyme M from coenzyme M-coenzyme B heterodisulfide: step 1/1. Part of a complex that catalyzes the reversible reduction of CoM-S-S-CoB to the thiol-coenzymes H-S-CoM (coenzyme M) and H-S-CoB (coenzyme B). The sequence is that of H(2)/formate:CoB-CoM heterodisulfide,ferredoxin reductase subunit C2 from Methanococcus maripaludis (strain DSM 14266 / JCM 13030 / NBRC 101832 / S2 / LL).